The sequence spans 245 residues: Probable phosphatase YcdX (245 aa).

Zn(2+)-binding residues include His7, His9, His15, His40, Glu73, His101, His131, Asp192, and His194.

Belongs to the PHP family. In terms of assembly, homotrimer. Requires Zn(2+) as cofactor.

The chain is Probable phosphatase YcdX from Escherichia coli O81 (strain ED1a).